A 552-amino-acid polypeptide reads, in one-letter code: Non-structural protein NS1 (552 aa).

It belongs to the orbivirus non-structural protein NS1 family.

The polypeptide is Non-structural protein NS1 (Segment-5) (Antilocapra americana (Pronghorn)).